The primary structure comprises 208 residues: Methenyltetrahydrofolate cyclohydrolase (208 aa).

Residues 25-46 traverse the membrane as a helical segment; that stretch reads GAAAISGAMGAALVSMVCNLTI.

It belongs to the cyclodeaminase/cyclohydrolase family. In terms of assembly, homodimer.

The protein resides in the membrane. It carries out the reaction (6R)-5,10-methenyltetrahydrofolate + H2O = (6R)-10-formyltetrahydrofolate + H(+). The protein operates within one-carbon metabolism; formaldehyde assimilation via serine pathway. Required for both C1 and C2 metabolism. The protein is Methenyltetrahydrofolate cyclohydrolase (fchA) of Methylorubrum extorquens (strain ATCC 14718 / DSM 1338 / JCM 2805 / NCIMB 9133 / AM1) (Methylobacterium extorquens).